A 197-amino-acid polypeptide reads, in one-letter code: RNA pyrophosphohydrolase (197 aa).

Residues 6–149 (GYRPNVGIVI…KRDVYRRAMK (144 aa)) enclose the Nudix hydrolase domain. Residues 38 to 59 (GGINEGETPEQAMFRELFEEVG) carry the Nudix box motif. Positions 170 to 197 (ETKKAETGKKQPYYHKYAPQNKKGRKRR) are disordered.

It belongs to the Nudix hydrolase family. RppH subfamily. A divalent metal cation serves as cofactor.

Its function is as follows. Accelerates the degradation of transcripts by removing pyrophosphate from the 5'-end of triphosphorylated RNA, leading to a more labile monophosphorylated state that can stimulate subsequent ribonuclease cleavage. The chain is RNA pyrophosphohydrolase from Actinobacillus succinogenes (strain ATCC 55618 / DSM 22257 / CCUG 43843 / 130Z).